Consider the following 430-residue polypeptide: Probable sugar isomerase R00627 (430 aa).

The Mn(2+) site is built by histidine 257, aspartate 289, and aspartate 291.

The protein belongs to the rhamnose isomerase family. Mn(2+) is required as a cofactor.

The protein is Probable sugar isomerase R00627 of Rhizobium meliloti (strain 1021) (Ensifer meliloti).